The following is a 246-amino-acid chain: B-cell receptor-associated protein 31 (246 aa).

Residues 2 to 6 (SLQWT) lie on the Lumenal side of the membrane. The chain crosses the membrane as a helical span at residues 7 to 27 (AVATFLYAEVFVVLLLCIPFI). At 28-43 (SPKRWQKIFKSRLVEL) the chain is on the cytoplasmic side. Residues 44-64 (LVSYGNTFFVVLIVILVLLVI) traverse the membrane as a helical segment. Residues 65 to 102 (DAVREIRKYDDVTEKVNLQNNPGAMEHFHMKLFRAQRN) lie on the Lumenal side of the membrane. Residues 103–123 (LYIAGFSLLLSFLLRRLVTLI) form a helical membrane-spanning segment. Residues 124 to 246 (SQQATLLASN…VDGPMDKKEE (123 aa)) lie on the Cytoplasmic side of the membrane. Residues 165–237 (GGKLDVGNAE…EEHAKLQAAV (73 aa)) adopt a coiled-coil conformation. Positions 243–246 (KKEE) match the Di-lysine motif motif.

Belongs to the BCAP29/BCAP31 family. As to quaternary structure, homodimer and heterodimer with BCAP29. Binds CASP8 (isoform 9) as a complex containing BCAP31, BCAP29, BCL2 and/or BCL2L1. Forms a complex (via C-terminus) with TOMM40 which mediates the translocation of components of the mitochondrial membrane respiratory chain NADH dehydrogenase (Complex I) from the cytosol to the mitochondria; within the complex BCAP31 interacts directly with unprocessed and processed NDUFS4 and NDUFB11. Interacts with VDAC1. Interacts with VAMP3, VAMP1 and membrane IgD immunoglobulins. Interacts with HACD2. Interacts with DNM1L; may form part of a larger protein complex at the endoplasmic reticulum-mitochondrial interface during mitochondrial fission. In terms of assembly, (Microbial infection) Interacts (via C-terminus) with HRSV membrane protein SH; this interaction is direct. Cleaved by CASP8 and other caspases. As to expression, ubiquitous. Highly expressed in neurons and discrete endocrine cells.

The protein localises to the endoplasmic reticulum membrane. The protein resides in the endoplasmic reticulum-Golgi intermediate compartment membrane. Functions as a chaperone protein. Is one of the most abundant endoplasmic reticulum (ER) proteins. Plays a role in the export of secreted proteins in the ER, the recognition of abnormally folded protein and their targeting to the ER associated-degradation (ERAD). Also serves as a cargo receptor for the export of transmembrane proteins. Plays a role in the assembly of the mitochondrial membrane respiratory chain NADH dehydrogenase (Complex I) by stimulating the translocation of NDUFS4 and NDUFB11 from the cytosol to the mitochondria via interaction with TOMM40. In response to ER stress, delocalizes from the ER-mitochondria contact sites and binds BCL2. May be involved in CASP8-mediated apoptosis. The chain is B-cell receptor-associated protein 31 from Homo sapiens (Human).